We begin with the raw amino-acid sequence, 511 residues long: Serine/threonine-protein kinase Nek3 (511 aa).

Met-1 carries the N-acetylmethionine modification. Positions 1-282 are interaction with VAV2; that stretch reads MDNYTVLRVI…EQILDEIKIS (282 aa). In terms of domain architecture, Protein kinase spans 4 to 255; sequence YTVLRVIGQG…ATTLLCRGSL (252 aa). Residues 10–18 and Lys-33 contribute to the ATP site; that span reads IGQGSFGRA. Asp-125 (proton acceptor) is an active-site residue. Thr-159 bears the Phosphothreonine; by autocatalysis mark. Disordered regions lie at residues 299–370 and 443–511; these read LGEA…GPSS and GPLS…GERA. Positions 309–321 are enriched in basic and acidic residues; sequence EEERGRKCSHTEL. Residues 472–485 are compositionally biased toward acidic residues; that stretch reads LDEEDTDFEEDNEN. Residue Thr-477 is modified to Phosphothreonine. Residues 498 to 511 are compositionally biased toward gly residues; sequence YGDGPGGQLLGERA.

Belongs to the protein kinase superfamily. NEK Ser/Thr protein kinase family. NIMA subfamily. As to quaternary structure, interacts with PXN, PRLR, VAV1 and VAV2 and this interaction is prolactin-dependent. Requires Mg(2+) as cofactor. In terms of processing, phosphorylation at Thr-477 regulates its catalytic activity. Brain.

The protein localises to the cytoplasm. It localises to the cell projection. The protein resides in the axon. It catalyses the reaction L-seryl-[protein] + ATP = O-phospho-L-seryl-[protein] + ADP + H(+). The enzyme catalyses L-threonyl-[protein] + ATP = O-phospho-L-threonyl-[protein] + ADP + H(+). Protein kinase which influences neuronal morphogenesis and polarity through effects on microtubules. Regulates microtubule acetylation in neurons. Contributes to prolactin-mediated phosphorylation of PXN and VAV2. This Mus musculus (Mouse) protein is Serine/threonine-protein kinase Nek3 (Nek3).